The following is a 143-amino-acid chain: 6,7-dimethyl-8-ribityllumazine synthase (143 aa).

5-amino-6-(D-ribitylamino)uracil-binding positions include F13, 45–47 (TFD), and 69–71 (CVI). 74–75 (ET) is a (2S)-2-hydroxy-3-oxobutyl phosphate binding site. The Proton donor role is filled by H77. L102 contacts 5-amino-6-(D-ribitylamino)uracil. R117 serves as a coordination point for (2S)-2-hydroxy-3-oxobutyl phosphate.

The protein belongs to the DMRL synthase family.

The enzyme catalyses (2S)-2-hydroxy-3-oxobutyl phosphate + 5-amino-6-(D-ribitylamino)uracil = 6,7-dimethyl-8-(1-D-ribityl)lumazine + phosphate + 2 H2O + H(+). It functions in the pathway cofactor biosynthesis; riboflavin biosynthesis; riboflavin from 2-hydroxy-3-oxobutyl phosphate and 5-amino-6-(D-ribitylamino)uracil: step 1/2. Functionally, catalyzes the formation of 6,7-dimethyl-8-ribityllumazine by condensation of 5-amino-6-(D-ribitylamino)uracil with 3,4-dihydroxy-2-butanone 4-phosphate. This is the penultimate step in the biosynthesis of riboflavin. This is 6,7-dimethyl-8-ribityllumazine synthase from Archaeoglobus fulgidus (strain ATCC 49558 / DSM 4304 / JCM 9628 / NBRC 100126 / VC-16).